Here is a 408-residue protein sequence, read N- to C-terminus: Aminoacylase-1 (408 aa).

Position 80 (H80) interacts with Zn(2+). The active site involves D82. Residue D113 coordinates Zn(2+). The active-site Proton acceptor is E147. Residues E148, E175, and H373 each contribute to the Zn(2+) site.

It belongs to the peptidase M20A family. As to quaternary structure, homodimer. Interacts with SPHK1. Zn(2+) serves as cofactor.

It localises to the cytoplasm. The catalysed reaction is an N-acyl-L-amino acid + H2O = an L-alpha-amino acid + a carboxylate. It carries out the reaction N-acetyl-L-methionine + H2O = L-methionine + acetate. It catalyses the reaction N-acetyl-L-glutamine + H2O = L-glutamine + acetate. In terms of biological role, catalyzes the hydrolysis of N-acetylated amino acids to acetate and free amino acids. In Pongo abelii (Sumatran orangutan), this protein is Aminoacylase-1 (ACY1).